The primary structure comprises 624 residues: Cilia- and flagella-associated protein 206 (624 aa).

The protein belongs to the CFAP206 family.

Its subcellular location is the cytoplasm. The protein resides in the cytoskeleton. The protein localises to the cilium axoneme. It is found in the cilium basal body. Essential for sperm motility and is involved in the regulation of the beating frequency of motile cilia on the epithelial cells of the respiratory tract. Required for the establishment of radial spokes in sperm flagella. The chain is Cilia- and flagella-associated protein 206 (cfap206) from Danio rerio (Zebrafish).